A 284-amino-acid chain; its full sequence is Bifunctional protein FolD (284 aa).

Residues 165-167 (GRS), serine 190, and isoleucine 231 each bind NADP(+).

The protein belongs to the tetrahydrofolate dehydrogenase/cyclohydrolase family. As to quaternary structure, homodimer.

The enzyme catalyses (6R)-5,10-methylene-5,6,7,8-tetrahydrofolate + NADP(+) = (6R)-5,10-methenyltetrahydrofolate + NADPH. It carries out the reaction (6R)-5,10-methenyltetrahydrofolate + H2O = (6R)-10-formyltetrahydrofolate + H(+). It participates in one-carbon metabolism; tetrahydrofolate interconversion. Functionally, catalyzes the oxidation of 5,10-methylenetetrahydrofolate to 5,10-methenyltetrahydrofolate and then the hydrolysis of 5,10-methenyltetrahydrofolate to 10-formyltetrahydrofolate. This is Bifunctional protein FolD from Streptococcus thermophilus (strain ATCC BAA-250 / LMG 18311).